A 520-amino-acid chain; its full sequence is Amine oxidase [flavin-containing] B (520 aa).

Ser-2 is subject to N-acetylserine. The Cytoplasmic portion of the chain corresponds to 2-489; it reads SSKCDVVVVG…TFLERHLPSV (488 aa). Residue Lys-52 is modified to N6-acetyllysine. Cys-397 carries the post-translational modification S-8alpha-FAD cysteine. A helical; Anchor for type IV membrane protein membrane pass occupies residues 490–516; it reads PGLLRLIGLTAIFSATALGYLAHKRGL. Residues 517–520 lie on the Mitochondrial intermembrane side of the membrane; the sequence is LVRV.

The protein belongs to the flavin monoamine oxidase family. As to quaternary structure, monomer, homo- or heterodimer (containing two subunits of similar size). Each subunit contains a covalently bound flavin. Enzymatically active as monomer. FAD is required as a cofactor.

The protein resides in the mitochondrion outer membrane. The enzyme catalyses a secondary aliphatic amine + O2 + H2O = a primary amine + an aldehyde + H2O2. The catalysed reaction is (R)-adrenaline + O2 + H2O = (R)-3,4-dihydroxymandelaldehyde + methylamine + H2O2. It carries out the reaction a primary methyl amine + O2 + H2O = an aldehyde + H2O2 + NH4(+). It catalyses the reaction benzylamine + O2 + H2O = benzaldehyde + H2O2 + NH4(+). The enzyme catalyses dopamine + O2 + H2O = 3,4-dihydroxyphenylacetaldehyde + H2O2 + NH4(+). The catalysed reaction is tyramine + O2 + H2O = (4-hydroxyphenyl)acetaldehyde + H2O2 + NH4(+). It carries out the reaction (R)-noradrenaline + O2 + H2O = (R)-3,4-dihydroxymandelaldehyde + H2O2 + NH4(+). It catalyses the reaction 2-phenylethylamine + O2 + H2O = 2-phenylacetaldehyde + H2O2 + NH4(+). The enzyme catalyses N-acetylputrescine + O2 + H2O = 4-acetamidobutanal + H2O2 + NH4(+). Functionally, catalyzes the oxidative deamination of primary and some secondary amines such as neurotransmitters, and exogenous amines including the tertiary amine, neurotoxin 1-methyl-4-phenyl-1,2,3,6-tetrahydropyridine (MPTP), with concomitant reduction of oxygen to hydrogen peroxide and participates in the metabolism of neuroactive and vasoactive amines in the central nervous system and peripheral tissues. Preferentially degrades benzylamine and phenylethylamine. In Sus scrofa (Pig), this protein is Amine oxidase [flavin-containing] B.